Here is a 189-residue protein sequence, read N- to C-terminus: MVKVIASSLRKGNVVDKDGKLYVILFAENIHPGKGTPVTQLDMRRIGDGVKVSERYRTTEQVERAYVEEREHTFLYADGEGFHFMNPETYDQVAVSEAVVGDAAPYLQEGMPVQVSQFNGIAISLVLPQRATFEVVETEPTTKGQTASSSYKPAVLSNGVRTAVPPHIAPGTRVVVMTADGSYVERAKD.

The protein belongs to the elongation factor P family.

It is found in the cytoplasm. It functions in the pathway protein biosynthesis; polypeptide chain elongation. In terms of biological role, involved in peptide bond synthesis. Stimulates efficient translation and peptide-bond synthesis on native or reconstituted 70S ribosomes in vitro. Probably functions indirectly by altering the affinity of the ribosome for aminoacyl-tRNA, thus increasing their reactivity as acceptors for peptidyl transferase. This Mesorhizobium japonicum (strain LMG 29417 / CECT 9101 / MAFF 303099) (Mesorhizobium loti (strain MAFF 303099)) protein is Elongation factor P 2.